A 175-amino-acid chain; its full sequence is uncharacterized protein (175 aa).

Residues 1-11 constitute a mitochondrion transit peptide; sequence METWRKGSFRN. A disordered region spans residues 24-92; that stretch reads RRLRRQSSVL…PRLYRESSSC (69 aa). Basic and acidic residues predominate over residues 41–63; it reads GDHEEYSNREVIRELQGRPDGRR.

Its subcellular location is the mitochondrion. This is an uncharacterized protein from Homo sapiens (Human).